Here is a 199-residue protein sequence, read N- to C-terminus: Protein PPP1R35 homolog (199 aa).

The segment covering 1-11 (MPHKRRNRVHA) has biased composition (basic residues). Disordered regions lie at residues 1 to 23 (MPHKRRNRVHANQRNFTARRVSV) and 36 to 60 (ESCNGSHADNSSPDSPKAKEGAMTN). The segment covering 38-49 (CNGSHADNSSPD) has biased composition (polar residues).

Belongs to the PPP1R35 family. As to quaternary structure, interacts with Ana3; this complex is recruited to daughter centrioles before their conversion to centrosomes.

The protein localises to the cytoplasm. The protein resides in the cytoskeleton. It localises to the microtubule organizing center. Its subcellular location is the centrosome. It is found in the centriole. In terms of biological role, participates in the later stages of centriole assembly through the interaction with Ana3 leading to the centriole to centrosome conversion in somatic cells. The sequence is that of Protein PPP1R35 homolog from Drosophila melanogaster (Fruit fly).